The following is a 207-amino-acid chain: GTP-binding protein Rheb homolog 1 (207 aa).

8 residues coordinate GTP: Gly25, Lys26, Ser27, Tyr42, Thr45, Asn126, Asp129, and Ala157. Ser27 contributes to the Mg(2+) binding site. Residues 42–50 (YESTIEDQH) carry the Effector region motif. Thr45 contributes to the Mg(2+) binding site. Over residues 180-193 (NLSPTERPNGNSPK) the composition is skewed to polar residues. Residues 180–207 (NLSPTERPNGNSPKRNPFKDDGKPCSIS) are disordered. The span at 196–207 (PFKDDGKPCSIS) shows a compositional bias: basic and acidic residues. The residue at position 204 (Cys204) is a Cysteine methyl ester. Cys204 is lipidated: S-farnesyl cysteine. Positions 205-207 (SIS) are cleaved as a propeptide — removed in mature form.

This sequence belongs to the small GTPase superfamily. Rheb family.

It is found in the cell membrane. The enzyme catalyses GTP + H2O = GDP + phosphate + H(+). In terms of biological role, binds GTP and exhibits intrinsic GTPase activity. This is GTP-binding protein Rheb homolog 1 (rheb-1) from Caenorhabditis elegans.